Consider the following 342-residue polypeptide: Succinylglutamate desuccinylase (342 aa).

Residues histidine 63, glutamate 66, and histidine 155 each contribute to the Zn(2+) site. Glutamate 219 is an active-site residue.

Belongs to the AspA/AstE family. Succinylglutamate desuccinylase subfamily. Zn(2+) serves as cofactor.

It carries out the reaction N-succinyl-L-glutamate + H2O = L-glutamate + succinate. It participates in amino-acid degradation; L-arginine degradation via AST pathway; L-glutamate and succinate from L-arginine: step 5/5. Transforms N(2)-succinylglutamate into succinate and glutamate. The sequence is that of Succinylglutamate desuccinylase from Vibrio parahaemolyticus serotype O3:K6 (strain RIMD 2210633).